Consider the following 333-residue polypeptide: Fatty acid hydroxylase domain-containing protein 2 (333 aa).

A run of 6 helical transmembrane segments spans residues 29 to 49, 77 to 97, 134 to 154, 168 to 188, 215 to 235, and 237 to 257; these read FILGSGLLSFVAFWNSVTWHL, ILFFIGAIQVPCLFFWSFNGL, TVLFNQCMISFPMVVFLYPFL, FHWFLLELAIFTLIEEVLFYY, VISLYAHPIEHAVSNMLPVIV, and PLVMGSHLSSITMWFSLALII. The Fatty acid hydroxylase domain occupies 176 to 299; the sequence is AIFTLIEEVL…LGVLDHLHGT (124 aa).

Belongs to the sterol desaturase family. Down-regulated in primary acute myeloid leukemia (AML) patients.

It is found in the cytoplasm. It localises to the membrane. In terms of biological role, promotes megakaryocyte differentiation by enhancing ERK phosphorylation and up-regulating RUNX1 expression. The sequence is that of Fatty acid hydroxylase domain-containing protein 2 (FAXDC2) from Homo sapiens (Human).